The sequence spans 382 residues: Succinate--CoA ligase [ADP-forming] subunit beta (382 aa).

The 229-residue stretch at 9 to 237 (KQVFADAGIP…AAEGDELEQK (229 aa)) folds into the ATP-grasp domain. ATP is bound by residues Lys-45, 52-54 (GRG), Glu-91, Val-94, and Glu-99. Residues Asn-191 and Asp-205 each contribute to the Mg(2+) site. Substrate is bound by residues Asn-257 and 314-316 (GIT).

The protein belongs to the succinate/malate CoA ligase beta subunit family. In terms of assembly, heterotetramer of two alpha and two beta subunits. The cofactor is Mg(2+).

The catalysed reaction is succinate + ATP + CoA = succinyl-CoA + ADP + phosphate. The enzyme catalyses GTP + succinate + CoA = succinyl-CoA + GDP + phosphate. The protein operates within carbohydrate metabolism; tricarboxylic acid cycle; succinate from succinyl-CoA (ligase route): step 1/1. In terms of biological role, succinyl-CoA synthetase functions in the citric acid cycle (TCA), coupling the hydrolysis of succinyl-CoA to the synthesis of either ATP or GTP and thus represents the only step of substrate-level phosphorylation in the TCA. The beta subunit provides nucleotide specificity of the enzyme and binds the substrate succinate, while the binding sites for coenzyme A and phosphate are found in the alpha subunit. The chain is Succinate--CoA ligase [ADP-forming] subunit beta from Haloarcula marismortui (strain ATCC 43049 / DSM 3752 / JCM 8966 / VKM B-1809) (Halobacterium marismortui).